The primary structure comprises 490 residues: Cytochrome P450 2C13, male-specific (490 aa).

Cys435 is a heme binding site.

The protein belongs to the cytochrome P450 family. Heme serves as cofactor. As to expression, liver, and to a lesser extent in prostate, kidney, heart and brain.

Its subcellular location is the endoplasmic reticulum membrane. It is found in the microsome membrane. It carries out the reaction an organic molecule + reduced [NADPH--hemoprotein reductase] + O2 = an alcohol + oxidized [NADPH--hemoprotein reductase] + H2O + H(+). Its function is as follows. Cytochromes P450 are a group of heme-thiolate monooxygenases. In liver microsomes, this enzyme is involved in an NADPH-dependent electron transport pathway. It oxidizes a variety of structurally unrelated compounds, including steroids, fatty acids, and xenobiotics. This chain is Cytochrome P450 2C13, male-specific (Cyp2c13), found in Rattus norvegicus (Rat).